A 108-amino-acid polypeptide reads, in one-letter code: Translation initiation factor 1A (108 aa).

The S1-like domain maps to 11 to 85 (PSRDVPKPEE…NRCDILYKYG (75 aa)).

It belongs to the eIF-1A family.

Its function is as follows. Seems to be required for maximal rate of protein biosynthesis. Enhances ribosome dissociation into subunits and stabilizes the binding of the initiator Met-tRNA(I) to 40 S ribosomal subunits. This Saccharolobus islandicus (strain Y.N.15.51 / Yellowstone #2) (Sulfolobus islandicus) protein is Translation initiation factor 1A (eIF1A).